We begin with the raw amino-acid sequence, 1245 residues long: Structural polyprotein (1245 aa).

Residues 1–106 (MNRGFFNMLG…KTKPGKRQRM (106 aa)) form a disordered region. Positions 37-70 (GLASQIQQLTTAVSALVIGQATRPQNPRPRPPPR) are host transcription inhibition. Residues 38-49 (LASQIQQLTTAV) show a composition bias toward polar residues. Positions 63–100 (PRPRPPPRQKKQAPKQPPKPKKPKPQEKKKKQPAKTKP) match the Nuclear localization signal motif. The span at 67-106 (PPPRQKKQAPKQPPKPKKPKPQEKKKKQPAKTKPGKRQRM) shows a compositional bias: basic residues. The binding to the viral RNA stretch occupies residues 86-115 (KPQEKKKKQPAKTKPGKRQRMALKLEADRL). Residues 100-114 (PGKRQRMALKLEADR) form a ribosome-binding region. Positions 114-264 (RLFDVKNEDG…KTTPEGTEEW (151 aa)) constitute a Peptidase S3 domain. His141 acts as the Charge relay system in catalysis. The Nuclear export signal signature appears at 146–156 (IDHPVLSKLKF). Residues 157 to 162 (TKSSAY) are interaction with spike glycoprotein E2. Catalysis depends on Asp163, which acts as the Charge relay system. Positions 185–195 (PEGFYNWHHGA) are dimerization of the capsid protein. Catalysis depends on Ser215, which acts as the Charge relay system. Residues 221–225 (DNSGR) form a dimerization of the capsid protein region. An interaction with spike glycoprotein E2 region spans residues 249 to 253 (SKGKT). The tract at residues 265–279 (SAAPLVTAMCLLGNV) is functions as an uncleaved signal peptide for the precursor of protein E3/E2. Asn278 is a glycosylation site (N-linked (GlcNAc...) asparagine; by host). 4 cysteine pairs are disulfide-bonded: Cys283/Cys289, Cys480/Cys594, Cys529/Cys554, and Cys531/Cys548. At 329 to 690 (SVTDDFTLTS…HEIVQHYYHR (362 aa)) the chain is on the extracellular side. Asn524 is a glycosylation site (N-linked (GlcNAc...) asparagine; by host). A glycan (N-linked (GlcNAc...) asparagine; by host) is linked at Asn646. The chain crosses the membrane as a helical span at residues 691 to 718 (HPVYTILAVASAAVAMMIGVTVAALCAC). Residues 719 to 723 (KARRE) are interaction with the capsid protein. At 719 to 751 (KARRECLTPYALAPNAVIPTSLALLCCVRSANA) the chain is on the cytoplasmic side. Residues Cys724, Cys744, and Cys745 are each lipidated (S-palmitoyl cysteine; by host). A disulfide bond links Cys724 and Cys745. Residues 752-763 (ETFTETMSYFWS) are Extracellular-facing. Residues 764-784 (NSQPFFWVQLCIPLAAVIVLM) traverse the membrane as a helical segment. Position 785 (Arg785) is a topological domain, cytoplasmic. The helical transmembrane segment at 786–806 (CCSCCLPFLVVAGAYLAKVDA) threads the bilayer. Residues 807-1214 (YEHATTVPNV…QAAISKTSWS (408 aa)) are Extracellular-facing. 4 disulfides stabilise this stretch: Cys855-Cys920, Cys868-Cys900, Cys869-Cys902, and Cys874-Cys884. Residues 890–907 (VYPFMWGGAQCFCDSENS) form an E1 fusion peptide loop region. N-linked (GlcNAc...) asparagine; by host glycans are attached at residues Asn945 and Asn1051. Disulfide bonds link Cys1065/Cys1077, Cys1107/Cys1182, Cys1112/Cys1186, and Cys1134/Cys1176. The chain crosses the membrane as a helical span at residues 1215-1239 (WLFALFGGASSLLIIGLTIFACSMM). Over 1240 to 1245 (LTSTRR) the chain is Cytoplasmic.

As to quaternary structure, homodimer. Homomultimer. Interacts with host karyopherin KPNA4; this interaction allows the nuclear import of the viral capsid protein. Interacts with spike glycoprotein E2. Interacts with host IRAK1; the interaction leads to inhibition of IRAK1-dependent signaling. In terms of assembly, the precursor of protein E3/E2 and E1 form a heterodimer shortly after synthesis. The precursor of protein E3/E2 and E1 form a heterodimer shortly after synthesis. Processing of the precursor of protein E3/E2 into E2 and E3 results in a heterodimer of the spike glycoproteins E2 and E1. Spike at virion surface are constituted of a trimer of E2-E1 heterodimers. After target cell attachment and endocytosis, E1 change conformation to form homotrimers. E2-E1 heterodimers interact with host VLDLR or LRP8/APOER2 to mediate viral entry. Interacts with 6K protein. As to quaternary structure, processing of the precursor of protein E3/E2 into E2 and E3 results in a heterodimer of the spike glycoproteins E2 and E1. Spike at virion surface are constituted of a trimer of E2-E1 heterodimers. E2-E1 heterodimers interact with host VLDLR or LRP8/APOER2 to mediate viral entry. Interacts with 6K protein. Interacts with the capsid protein. In terms of assembly, oligomer. Interacts with spike glycoprotein E1. Interacts with spike glycoprotein E2. In terms of processing, structural polyprotein: Specific enzymatic cleavages in vivo yield mature proteins. Capsid protein is auto-cleaved during polyprotein translation, unmasking a signal peptide at the N-terminus of the precursor of E3/E2. The remaining polyprotein is then targeted to the host endoplasmic reticulum, where host signal peptidase cleaves it into pE2, 6K and E1 proteins. pE2 is further processed to mature E3 and E2 by host furin in trans-Golgi vesicle. Post-translationally, palmitoylated via thioester bonds. These palmitoylations may induce disruption of the C-terminus transmembrane. This would result in the reorientation of E2 C-terminus from lumenal to cytoplasmic side. N-glycosylated. In terms of processing, palmitoylated via thioester bonds.

It localises to the virion. The protein resides in the host cytoplasm. The protein localises to the host cell membrane. Its subcellular location is the host nucleus. It is found in the virion membrane. It localises to the host Golgi apparatus. The protein resides in the host trans-Golgi network. The protein localises to the host endoplasmic reticulum. The enzyme catalyses Autocatalytic release of the core protein from the N-terminus of the togavirus structural polyprotein by hydrolysis of a -Trp-|-Ser- bond.. In terms of biological role, forms an icosahedral capsid with a T=4 symmetry composed of 240 copies of the capsid protein surrounded by a lipid membrane through which penetrate 80 spikes composed of trimers of E1-E2 heterodimers. The capsid protein binds to the viral RNA genome at a site adjacent to a ribosome binding site for viral genome translation following genome release. Possesses a protease activity that results in its autocatalytic cleavage from the nascent structural protein. Following its self-cleavage, the capsid protein transiently associates with ribosomes, and within several minutes the protein binds to viral RNA and rapidly assembles into icosahedric core particles. The resulting nucleocapsid eventually associates with the cytoplasmic domain of the spike glycoprotein E2 at the cell membrane, leading to budding and formation of mature virions. In case of infection, new virions attach to target cells and after clathrin-mediated endocytosis their membrane fuses with the host endosomal membrane. This leads to the release of the nucleocapsid into the cytoplasm, followed by an uncoating event necessary for the genomic RNA to become accessible. The uncoating might be triggered by the interaction of capsid proteins with ribosomes. Binding of ribosomes would release the genomic RNA since the same region is genomic RNA-binding and ribosome-binding. Specifically inhibits interleukin-1 receptor-associated kinase 1/IRAK1-dependent signaling during viral entry, representing a means by which the alphaviruses may evade innate immune detection and activation prior to viral gene expression. Functionally, provides the signal sequence for the translocation of the precursor of protein E3/E2 to the host endoplasmic reticulum. Furin-cleaved E3 remains associated with spike glycoprotein E1 and mediates pH protection of the latter during the transport via the secretory pathway. After virion release from the host cell, the assembly protein E3 is gradually released in the extracellular space. Plays a role in viral attachment to target host cell, by binding to the cell receptors VLDLR or LRP8/APOER2. Synthesized as a pE2 precursor which is processed by furin at the cell membrane just before virion budding, giving rise to E2-E1 heterodimer. The pE2-E1 heterodimer is stable, whereas E2-E1 is unstable and dissociate at low pH. pE2 is processed at the last step, presumably to avoid E1 fusion activation before its final export to cell surface. E2 C-terminus contains a transitory transmembrane that would be disrupted by palmitoylation, resulting in reorientation of the C-terminal tail from lumenal to cytoplasmic side. This step is critical since E2 C-terminus is involved in budding by interacting with capsid proteins. This release of E2 C-terminus in cytoplasm occurs lately in protein export, and precludes premature assembly of particles at the endoplasmic reticulum membrane. Its function is as follows. Acts as a viroporin that participates in virus glycoprotein processing and transport to the plasma membrane, cell permeabilization and budding of viral particles. Disrupts the calcium homeostasis of the cell, probably at the endoplasmic reticulum level resulting in the increased levels of cytoplasmic calcium. Because of its lipophilic properties, the 6K protein is postulated to influence the selection of lipids that interact with the transmembrane domains of the glycoproteins, which, in turn, affects the deformability of the bilayer required for the extreme curvature that occurs as budding proceeds. Present in low amount in virions, about 3% compared to viral glycoproteins. In terms of biological role, class II viral fusion protein. Fusion activity is inactive as long as E1 is bound to E2 in mature virion. After virus attachment to target cell via host VLDLR or LRP8/APOER2 and endocytosis, acidification of the endosome induces dissociation of E1/E2 heterodimer and concomitant trimerization of the E1 subunits. This E1 trimer is fusion active, and promotes release of viral nucleocapsid in cytoplasm after endosome and viral membrane fusion. Efficient fusion requires the presence of cholesterol and sphingolipid in the target membrane. The sequence is that of Structural polyprotein from Acrocephalus scirpaceus (Eurasian reed-warbler).